A 1020-amino-acid polypeptide reads, in one-letter code: Protein SCAR3 (1020 aa).

Disordered stretches follow at residues 167–198 (NLSQ…DMSR), 351–382 (DEKP…LRKR), and 802–827 (DYLS…GRKE). Basic residues predominate over residues 174-191 (KFQKDKKHCKMKKKKTSS). The segment covering 365–382 (FHSKDNENDKSESGLRKR) has biased composition (basic and acidic residues). The segment covering 802–814 (DYLSDNHSLSNSE) has biased composition (polar residues). A WH2 domain is found at 954–972 (ETGDFLQQIRTQQFNLRPV).

This sequence belongs to the SCAR/WAVE family. As to quaternary structure, binds BRK1. Interacts with SPK1, ABI1, ABI2, ABI3 and ABI4. As to expression, expressed in expanding cotyledons, expanding leaves and expanding siliques containing developing embryos. Detected in unopened flower buds. Reduced expression in mature leaves and mature cotyledons.

The protein localises to the cytoplasm. The protein resides in the cytoskeleton. Functionally, involved in regulation of actin and microtubule organization. Part of a WAVE complex that activates the Arp2/3 complex. Regulates trichome branch positioning and expansion. In Arabidopsis thaliana (Mouse-ear cress), this protein is Protein SCAR3 (SCAR3).